Reading from the N-terminus, the 380-residue chain is Putative 12-oxophytodienoate reductase 4 (380 aa).

Residues 36–38 (PLT), Ala69, and Gln111 each bind FMN. 183 to 186 (HGAH) serves as a coordination point for substrate. Tyr188 functions as the Proton donor in the catalytic mechanism. Arg235 serves as a coordination point for FMN. Position 276 (Arg276) interacts with substrate. FMN is bound by residues Gly306 and 327 to 328 (GR).

It belongs to the NADH:flavin oxidoreductase/NADH oxidase family. It depends on FMN as a cofactor.

Putative oxophytodienoate reductase that may be involved in the biosynthesis or metabolism of oxylipin signaling molecules. This Oryza sativa subsp. japonica (Rice) protein is Putative 12-oxophytodienoate reductase 4 (OPR4).